A 488-amino-acid chain; its full sequence is Probable glycine dehydrogenase (decarboxylating) subunit 2 (488 aa).

Position 274 is an N6-(pyridoxal phosphate)lysine (Lys274).

Belongs to the GcvP family. C-terminal subunit subfamily. In terms of assembly, the glycine cleavage system is composed of four proteins: P, T, L and H. In this organism, the P 'protein' is a heterodimer of two subunits. Pyridoxal 5'-phosphate is required as a cofactor.

It catalyses the reaction N(6)-[(R)-lipoyl]-L-lysyl-[glycine-cleavage complex H protein] + glycine + H(+) = N(6)-[(R)-S(8)-aminomethyldihydrolipoyl]-L-lysyl-[glycine-cleavage complex H protein] + CO2. The glycine cleavage system catalyzes the degradation of glycine. The P protein binds the alpha-amino group of glycine through its pyridoxal phosphate cofactor; CO(2) is released and the remaining methylamine moiety is then transferred to the lipoamide cofactor of the H protein. The chain is Probable glycine dehydrogenase (decarboxylating) subunit 2 from Listeria monocytogenes serotype 4b (strain F2365).